Reading from the N-terminus, the 397-residue chain is Lysophospholipid transporter LplT (397 aa).

Topologically, residues Met-1 to Lys-17 are periplasmic. Residues Ala-18–Leu-38 form a helical membrane-spanning segment. The Cytoplasmic segment spans residues Ala-39–Pro-52. Residues Ile-53 to Ala-73 form a helical membrane-spanning segment. The Periplasmic segment spans residues Asp-74–Leu-90. Residues Leu-91–Val-111 traverse the membrane as a helical segment. The Cytoplasmic portion of the chain corresponds to Gly-112 to Thr-144. Residues Ile-145–Val-165 traverse the membrane as a helical segment. A topological domain (periplasmic) is located at residue Ala-166. The helical transmembrane segment at Leu-167–Leu-187 threads the bilayer. The Cytoplasmic portion of the chain corresponds to Ala-188–Ser-226. A helical membrane pass occupies residues Leu-227–Leu-247. At Gly-248–Thr-256 the chain is on the periplasmic side. The helical transmembrane segment at Tyr-257 to Val-277 threads the bilayer. Residues Thr-278–Glu-280 lie on the Cytoplasmic side of the membrane. A helical membrane pass occupies residues Thr-281–Leu-301. The Periplasmic segment spans residues Gln-302 to Glu-304. Residues Leu-305 to Pro-325 form a helical membrane-spanning segment. The Cytoplasmic portion of the chain corresponds to Leu-326–Ala-343. Residues Ile-344–Leu-364 form a helical membrane-spanning segment. The Periplasmic segment spans residues Ala-365 to Val-366. Residues Met-367 to Ile-387 traverse the membrane as a helical segment. Residues Thr-388–His-397 lie on the Cytoplasmic side of the membrane.

It belongs to the major facilitator superfamily. LplT (TC 2.A.1.42) family.

It localises to the cell inner membrane. Functionally, catalyzes the facilitated diffusion of 2-acyl-glycero-3-phosphoethanolamine (2-acyl-GPE) into the cell. This Escherichia coli (strain SE11) protein is Lysophospholipid transporter LplT.